Reading from the N-terminus, the 136-residue chain is Small ribosomal subunit protein bS16 (136 aa).

Basic residues predominate over residues 114-123; the sequence is TLKARRRRAK. A disordered region spans residues 114–136; the sequence is TLKARRRRAKKEAEAASASSAEG.

The protein belongs to the bacterial ribosomal protein bS16 family.

The protein is Small ribosomal subunit protein bS16 of Chlorobium chlorochromatii (strain CaD3).